The following is a 664-amino-acid chain: ATP-dependent zinc metalloprotease FtsH (664 aa).

The Cytoplasmic segment spans residues 1–9 (MKQNIKRNW). Residues 10-30 (IWILIVMIVIGIILYFSIRNL) form a helical membrane-spanning segment. Topologically, residues 31–136 (FSTKVAEWSI…KSVATPQPNP (106 aa)) are extracellular. The helical transmembrane segment at 137 to 157 (FLGILISSVPVLILIFVMVWI) threads the bilayer. The Cytoplasmic portion of the chain corresponds to 158–664 (YRSQVKMMNG…SLIEKTSKKE (507 aa)). 229-236 (GPPGTGKT) is a binding site for ATP. Histidine 451 lines the Zn(2+) pocket. Glutamate 452 is an active-site residue. Zn(2+) contacts are provided by histidine 455 and aspartate 529. The segment covering 639-649 (IEEKDLSKNSE) has biased composition (basic and acidic residues). Positions 639–664 (IEEKDLSKNSEDNNLDSLIEKTSKKE) are disordered.

It in the central section; belongs to the AAA ATPase family. In the C-terminal section; belongs to the peptidase M41 family. In terms of assembly, homohexamer. Requires Zn(2+) as cofactor.

It is found in the cell membrane. Functionally, acts as a processive, ATP-dependent zinc metallopeptidase for both cytoplasmic and membrane proteins. Plays a role in the quality control of integral membrane proteins. The sequence is that of ATP-dependent zinc metalloprotease FtsH from Mycoplasmopsis synoviae (strain 53) (Mycoplasma synoviae).